A 378-amino-acid chain; its full sequence is MVKLPPLSLYIHIPWCVQKCPYCDFNSHALKGEVPHDDYVQHLLNDLDNDVAYAQGREVKTIFIGGGTPSLLSGPAMQTLLDGVRARLPLAADAEITMEANPGTVEADRFVDYQRAGVNRISIGVQSFSEEKLKRLGRIHGPQEAKRAAKLASGLGLRSFNLDLMHGLPDQSLEEALGDLRQAIELNPPHLSWYQLTIEPNTLFGSRPPVLPDDDALWDIFEQGHQLLTAAGYQQYETSAYAKPGYQCQHNLNYWRFGDYIGIGCGAHGKVTFPDGRILRTTKTRHPRGFMQGRYLESQRDVEATDKPFEFFMNRFRLLEAAPRVEFIAYTGLCEDVIRPQLDEAIAQGYLTECADYWQITEHGKLFLNSLLELFLAE.

Residues 1 to 237 form the Radical SAM core domain; that stretch reads MVKLPPLSLY…LTAAGYQQYE (237 aa). Residue tyrosine 10 participates in S-adenosyl-L-methionine binding. Cysteine 16, cysteine 20, and cysteine 23 together coordinate [4Fe-4S] cluster. Residues glycine 66, 67–68, glutamate 99, glutamine 126, arginine 138, and aspartate 163 contribute to the S-adenosyl-L-methionine site; that span reads GT.

This sequence belongs to the anaerobic coproporphyrinogen-III oxidase family. HemW subfamily. As to quaternary structure, binding of the [4Fe-4S] cofactor promotes dimerization. It depends on [4Fe-4S] cluster as a cofactor.

The protein localises to the cytoplasm. Probably acts as a heme chaperone, transferring heme to the NarI subunit of the respiratory enzyme nitrate reductase; transfer may be stimulated by NADH. Binds one molecule of heme per monomer, possibly covalently. Heme binding is not affected by either [4Fe-4S] or S-adenosyl-L-methionine (SAM)-binding. Does not have coproporphyrinogen III dehydrogenase activity in vitro. Binds 1 [4Fe-4S] cluster. The cluster is coordinated with 3 cysteines and an exchangeable S-adenosyl-L-methionine. This is Heme chaperone HemW from Escherichia coli (strain K12).